Consider the following 147-residue polypeptide: Glucosamine 6-phosphate N-acetyltransferase (147 aa).

The 141-residue stretch at 7–147 folds into the N-acetyltransferase domain; it reads LELRVLEESD…AHERQMRLDL (141 aa). Residues T28 and 86–88 each bind D-glucosamine 6-phosphate; that span reads EDV. Acetyl-CoA is bound by residues 88-90 and 96-101; these read VVV and GAGLGK. Residues 117–118 and D122 each bind D-glucosamine 6-phosphate; that span reads YK. 131 to 133 lines the acetyl-CoA pocket; that stretch reads YEK.

It belongs to the acetyltransferase family. GNA1 subfamily. As to quaternary structure, homodimer. Contains poly-N-acetyllactosamines.

It is found in the glycosome. It carries out the reaction D-glucosamine 6-phosphate + acetyl-CoA = N-acetyl-D-glucosamine 6-phosphate + CoA + H(+). It functions in the pathway nucleotide-sugar biosynthesis; UDP-N-acetyl-alpha-D-glucosamine biosynthesis; N-acetyl-alpha-D-glucosamine 1-phosphate from alpha-D-glucosamine 6-phosphate (route I): step 1/2. Functionally, involved in the biosynthesis of UDP-N-acetyl-alpha-D-glucosamine. Catalyzes the formation of N-acetyl-D-glucosamine 6-phosphate from acetyl-coenzyme A (acetyl-CoA) and D-glucosamine 6-phosphate. The chain is Glucosamine 6-phosphate N-acetyltransferase from Trypanosoma brucei brucei.